Here is a 154-residue protein sequence, read N- to C-terminus: MSNSVELSSYRDQHFKGSRSEQERSLKESCTLYVGNLSFYTTEEQIHELFSRCGDVRLIVMGLDKYKKTPCGFCFVEYYTRSEAESAMRFVNGTRLDDRLIRVDWDAGFIEGRQYGRGKTGGQVRDEYRTDYDAGRGGYGKLLSQKIAPNTDNR.

Residues Tyr-10, Tyr-33, 102–106 (RVDWD), 113–117 (RQYGR), and 123–124 (QV) contribute to the mRNA site. The RRM domain occupies 30-108 (CTLYVGNLSF…RLIRVDWDAG (79 aa)).

The protein belongs to the RRM NCBP2 family. In terms of assembly, component of the nuclear cap-binding complex (CBC), a heterodimer composed of Cbp80 and Cbp20 that interacts with m7GpppG-capped RNA. Interacts with Ars2.

The protein resides in the nucleus. Its function is as follows. Component of the cap-binding complex (CBC), which binds co-transcriptionally to the 5' cap of pre-mRNAs and is involved in various processes such as pre-mRNA splicing and RNA-mediated gene silencing (RNAi). The CBC complex is involved in miRNA-mediated RNA interference via its interaction with Ars2 and is required for primary microRNAs (miRNAs) processing. Also involved in innate immunity via the short interfering RNAs (siRNAs) processing machinery by restricting the viral RNA production. In the CBC complex, Cbp20 recognizes and binds capped RNAs (m7GpppG-capped RNA) but requires Cbp80 to stabilize the movement of its N-terminal loop and lock the CBC into a high affinity cap-binding state with the cap structure. This Drosophila willistoni (Fruit fly) protein is Nuclear cap-binding protein subunit 2 (Cbp20).